We begin with the raw amino-acid sequence, 289 residues long: Acetyl-coenzyme A carboxylase carboxyl transferase subunit beta (289 aa).

Residues 28-289 (VMTKCPECKK…QGGEMAVWQS (262 aa)) form the CoA carboxyltransferase N-terminal domain. 4 residues coordinate Zn(2+): Cys-32, Cys-35, Cys-51, and Cys-54. A C4-type zinc finger spans residues 32–54 (CPECKKIMYTKELLKNLKVCVNC).

It belongs to the AccD/PCCB family. As to quaternary structure, acetyl-CoA carboxylase is a heterohexamer composed of biotin carboxyl carrier protein (AccB), biotin carboxylase (AccC) and two subunits each of ACCase subunit alpha (AccA) and ACCase subunit beta (AccD). Zn(2+) is required as a cofactor.

The protein localises to the cytoplasm. The enzyme catalyses N(6)-carboxybiotinyl-L-lysyl-[protein] + acetyl-CoA = N(6)-biotinyl-L-lysyl-[protein] + malonyl-CoA. Its pathway is lipid metabolism; malonyl-CoA biosynthesis; malonyl-CoA from acetyl-CoA: step 1/1. Its function is as follows. Component of the acetyl coenzyme A carboxylase (ACC) complex. Biotin carboxylase (BC) catalyzes the carboxylation of biotin on its carrier protein (BCCP) and then the CO(2) group is transferred by the transcarboxylase to acetyl-CoA to form malonyl-CoA. In Bacillus cereus (strain ATCC 14579 / DSM 31 / CCUG 7414 / JCM 2152 / NBRC 15305 / NCIMB 9373 / NCTC 2599 / NRRL B-3711), this protein is Acetyl-coenzyme A carboxylase carboxyl transferase subunit beta.